A 240-amino-acid polypeptide reads, in one-letter code: Pro-opiomelanocortin B (240 aa).

The signal sequence occupies residues 1–36 (MFGTFLQNQSVRLNMVCAPWLLAVVVVCVCNPGVEG). At Gln-37 the chain carries Pyrrolidone carboxylic acid. Residue His-111 is a propeptide. Ser-112 carries the N-acetylserine; in Corticotropin modification. Position 124 is an isoleucine amide (Ile-124).

It belongs to the POMC family. Specific enzymatic cleavages at paired basic residues yield the different active peptides. In terms of processing, acetylation of beta-endorphin occurs in a tissue-specific manner. As to expression, pituitary and hypothalamus of adult diploid animals.

Its subcellular location is the secreted. Functionally, stimulates the adrenal glands to release cortisol. Melanocyte-stimulating hormone alpha: Anorexigenic peptide. Increases the pigmentation of skin by increasing melanin production in melanocytes. In terms of biological role, melanocyte-stimulating hormone beta: Increases the pigmentation of skin by increasing melanin production in melanocytes. Its function is as follows. Beta-endorphin: Endogenous orexigenic opiate. Functionally, endogenous opiate. This is Pro-opiomelanocortin B (pomcb) from Oncorhynchus mykiss (Rainbow trout).